A 272-amino-acid chain; its full sequence is D-aminoacyl-tRNA deacylase (272 aa).

The protein belongs to the DtdA deacylase family. Monomer. It depends on Zn(2+) as a cofactor.

It carries out the reaction a D-aminoacyl-tRNA + H2O = a tRNA + a D-alpha-amino acid + H(+). The catalysed reaction is glycyl-tRNA(Ala) + H2O = tRNA(Ala) + glycine + H(+). D-aminoacyl-tRNA deacylase with broad substrate specificity. By recycling D-aminoacyl-tRNA to D-amino acids and free tRNA molecules, this enzyme counteracts the toxicity associated with the formation of D-aminoacyl-tRNA entities in vivo. The polypeptide is D-aminoacyl-tRNA deacylase (Desulfurococcus amylolyticus (strain DSM 18924 / JCM 16383 / VKM B-2413 / 1221n) (Desulfurococcus kamchatkensis)).